Reading from the N-terminus, the 459-residue chain is Ribulose bisphosphate carboxylase large chain (459 aa).

Residue K4 is modified to N6,N6,N6-trimethyllysine. Substrate contacts are provided by N113 and T163. The active-site Proton acceptor is K165. K167 serves as a coordination point for substrate. 3 residues coordinate Mg(2+): K191, D193, and E194. The residue at position 191 (K191) is an N6-carboxylysine. Catalysis depends on H284, which acts as the Proton acceptor. Residues R285, H317, and S369 each contribute to the substrate site.

The protein belongs to the RuBisCO large chain family. Type I subfamily. As to quaternary structure, heterohexadecamer of 8 large chains and 8 small chains; disulfide-linked. The disulfide link is formed within the large subunit homodimers. Requires Mg(2+) as cofactor. In terms of processing, the disulfide bond which can form in the large chain dimeric partners within the hexadecamer appears to be associated with oxidative stress and protein turnover.

The protein localises to the plastid. It is found in the chloroplast. The enzyme catalyses 2 (2R)-3-phosphoglycerate + 2 H(+) = D-ribulose 1,5-bisphosphate + CO2 + H2O. It carries out the reaction D-ribulose 1,5-bisphosphate + O2 = 2-phosphoglycolate + (2R)-3-phosphoglycerate + 2 H(+). Functionally, ruBisCO catalyzes two reactions: the carboxylation of D-ribulose 1,5-bisphosphate, the primary event in carbon dioxide fixation, as well as the oxidative fragmentation of the pentose substrate in the photorespiration process. Both reactions occur simultaneously and in competition at the same active site. In Ceratopetalum gummiferum (New South Wales Christmas bush), this protein is Ribulose bisphosphate carboxylase large chain.